We begin with the raw amino-acid sequence, 2284 residues long: RNA1 polyprotein (2284 aa).

Residues 567–1172 (CTAEEIFRMH…LVENYSLLLT (606 aa)) are Cytoplasmic-facing. The 169-residue stretch at 750–918 (VSKLEEVHQR…DNTHFTPRAY (169 aa)) folds into the SF3 helicase domain. 780 to 787 (GASQSGKT) contributes to the ATP binding site. The chain crosses the membrane as a helical span at residues 1173-1193 (LVAILVLIATAYSLISTLIGL). The Lumenal segment spans residues 1194 to 1216 (AGCSSFAGGMVALNHVSNASIPC). The residue at position 1217 (S1217) is an O-(5'-phospho-RNA)-serine. Residues 1242–1457 (GPAQGQGDHE…SVIPSYSSSF (216 aa)) enclose the Peptidase C3 domain. Residues H1283, E1327, and C1419 each act as for picornain 3C-like protease activity in the active site. One can recognise a RdRp catalytic domain in the interval 1727–1851 (DVGYNCDYKG…TVSQSIMTSF (125 aa)).

It belongs to the nepoviruses RNA1 polyprotein family. Specific enzymatic cleavages by picornain 3C-like protease in vivo yield mature proteins. Picornain 3C-like protease is autocatalytically processed. In terms of processing, VPg is uridylylated by the polymerase and is covalently linked to the 5'-end of genomic RNA. This uridylylated form acts as a nucleotide-peptide primer for the polymerase.

Its subcellular location is the host endoplasmic reticulum lumen. The protein localises to the host endoplasmic reticulum membrane. The enzyme catalyses RNA(n) + a ribonucleoside 5'-triphosphate = RNA(n+1) + diphosphate. Its function is as follows. Picornain 3C-like protease is a thiol protease that cleaves the P1 and P2 polyproteins. The sequence is that of RNA1 polyprotein from Vitis vinifera (Grape).